The primary structure comprises 237 residues: Phosphoribosylaminoimidazole-succinocarboxamide synthase (237 aa).

It belongs to the SAICAR synthetase family.

The enzyme catalyses 5-amino-1-(5-phospho-D-ribosyl)imidazole-4-carboxylate + L-aspartate + ATP = (2S)-2-[5-amino-1-(5-phospho-beta-D-ribosyl)imidazole-4-carboxamido]succinate + ADP + phosphate + 2 H(+). It functions in the pathway purine metabolism; IMP biosynthesis via de novo pathway; 5-amino-1-(5-phospho-D-ribosyl)imidazole-4-carboxamide from 5-amino-1-(5-phospho-D-ribosyl)imidazole-4-carboxylate: step 1/2. The protein is Phosphoribosylaminoimidazole-succinocarboxamide synthase of Listeria monocytogenes serotype 4a (strain HCC23).